The primary structure comprises 155 residues: Pathogenesis-related protein B (155 aa).

It belongs to the BetVI family.

The polypeptide is Pathogenesis-related protein B (PCPR1-3) (Petroselinum crispum (Parsley)).